The primary structure comprises 369 residues: Biglycan (369 aa).

A signal peptide spans 1–16 (MCPLWLLTLLLALSQA). A propeptide spanning residues 17-37 (LPFEQKGFWDFTLDDGLLMMN) is cleaved from the precursor. 2 O-linked (Xyl...) (glycosaminoglycan) serine glycosylation sites follow: Ser42 and Ser48. 2 disulfide bridges follow: Cys64–Cys70 and Cys68–Cys77. 12 LRR repeats span residues 83–103 (KTVP…NNDI), 104–127 (SELR…NNKI), 128–151 (SKIH…KNHL), 152–172 (VEIP…DNRI), 173–196 (RKVP…GNPL), 197–221 (ENSG…EAKL), 222–242 (TGIP…HNKI), 243–266 (QAIE…HNQI), 267–290 (RMIE…NNKL), 291–313 (SRVP…SNNI), 314–343 (TKVG…NNPV), and 344–369 (PYWE…NYKK). N-linked (GlcNAc...) asparagine glycans are attached at residues Asn271 and Asn312. Cys322 and Cys355 form a disulfide bridge.

The protein belongs to the small leucine-rich proteoglycan (SLRP) family. SLRP class I subfamily. Post-translationally, the two attached glycosaminoglycan chains can be either chondroitin sulfate or dermatan sulfate. As to expression, found in several connective tissues, especially in articular cartilages.

The protein localises to the secreted. It is found in the extracellular space. Its subcellular location is the extracellular matrix. Functionally, may be involved in collagen fiber assembly. The protein is Biglycan (Bgn) of Mus musculus (Mouse).